The primary structure comprises 140 residues: 3-hydroxyacyl-[acyl-carrier-protein] dehydratase FabZ (140 aa).

His-48 is an active-site residue.

The protein belongs to the thioester dehydratase family. FabZ subfamily.

The protein resides in the cytoplasm. The catalysed reaction is a (3R)-hydroxyacyl-[ACP] = a (2E)-enoyl-[ACP] + H2O. Its function is as follows. Involved in unsaturated fatty acids biosynthesis. Catalyzes the dehydration of short chain beta-hydroxyacyl-ACPs and long chain saturated and unsaturated beta-hydroxyacyl-ACPs. This is 3-hydroxyacyl-[acyl-carrier-protein] dehydratase FabZ from Halalkalibacterium halodurans (strain ATCC BAA-125 / DSM 18197 / FERM 7344 / JCM 9153 / C-125) (Bacillus halodurans).